The chain runs to 629 residues: DNA-directed RNA polymerase subunit beta' (629 aa).

The Zn(2+) site is built by cysteine 70, cysteine 72, cysteine 85, and cysteine 88. The Mg(2+) site is built by aspartate 472, aspartate 474, and aspartate 476.

The protein belongs to the RNA polymerase beta' chain family. RpoC1 subfamily. In plastids the minimal PEP RNA polymerase catalytic core is composed of four subunits: alpha, beta, beta', and beta''. When a (nuclear-encoded) sigma factor is associated with the core the holoenzyme is formed, which can initiate transcription. Mg(2+) serves as cofactor. The cofactor is Zn(2+).

Its subcellular location is the plastid. The protein resides in the chloroplast. It catalyses the reaction RNA(n) + a ribonucleoside 5'-triphosphate = RNA(n+1) + diphosphate. Functionally, DNA-dependent RNA polymerase catalyzes the transcription of DNA into RNA using the four ribonucleoside triphosphates as substrates. This is DNA-directed RNA polymerase subunit beta' from Porphyra purpurea (Red seaweed).